Consider the following 93-residue polypeptide: Small ribosomal subunit protein uS19 (93 aa).

This sequence belongs to the universal ribosomal protein uS19 family.

Its function is as follows. Protein S19 forms a complex with S13 that binds strongly to the 16S ribosomal RNA. This is Small ribosomal subunit protein uS19 from Anaplasma marginale (strain Florida).